An 891-amino-acid chain; its full sequence is Dynein axonemal intermediate chain 3 (891 aa).

Over residues 1–17 the composition is skewed to basic residues; that stretch reads MAPKQKKKTSRGKKRLK. The segment at 1–22 is disordered; it reads MAPKQKKKTSRGKKRLKPVLAA. WD repeat units lie at residues 395–435, 477–533, 670–709, and 713–753; these read ESPD…DRIE, GHKK…PLTP, IHDGTVHTIQRSPFYNDIILTVGGWNVAIWKEGVMTGPLL, and CAPK…HEPA. A coiled-coil region spans residues 818 to 861; that stretch reads LEYVEQRKKIREQEKKEMELEMAKKKVKTYQKSKEQMQAELKMD.

As to quaternary structure, interacts with ACTR2; this interaction reduces binding of the Arp2/3 complex to the VCA domain of nucleation promoting factors. Part of the multisubunit axonemal dynein complex formed at least of two heavy chains and a number of intermediate and light chains. Found in a associated with the catalytic heavy chain DNAH2, the intermediate chain DNAI4, and the light chain DYNLT1.

The protein resides in the cytoplasm. Its function is as follows. Acts as a negative regulator of cell migration, invasion, and metastasis downstream of p53/TP53, through inhibition of Arp2/3 complex-mediated actin polymerization. Via its association with the multisubunit axonemal dynein complex, is potentially involved in the regulation of cilia function. May play a role in osteogenesis of dental tissue-derived mesenchymal stem cells. In Homo sapiens (Human), this protein is Dynein axonemal intermediate chain 3.